Reading from the N-terminus, the 106-residue chain is UPF0145 protein PSEEN3024 (106 aa).

Belongs to the UPF0145 family.

This chain is UPF0145 protein PSEEN3024, found in Pseudomonas entomophila (strain L48).